The sequence spans 526 residues: Histidine ammonia-lyase (526 aa).

Positions A143–G145 form a cross-link, 5-imidazolinone (Ala-Gly). The residue at position 144 (S144) is a 2,3-didehydroalanine (Ser).

Belongs to the PAL/histidase family. In terms of processing, contains an active site 4-methylidene-imidazol-5-one (MIO), which is formed autocatalytically by cyclization and dehydration of residues Ala-Ser-Gly.

It localises to the cytoplasm. It carries out the reaction L-histidine = trans-urocanate + NH4(+). It participates in amino-acid degradation; L-histidine degradation into L-glutamate; N-formimidoyl-L-glutamate from L-histidine: step 1/3. In Aromatoleum aromaticum (strain DSM 19018 / LMG 30748 / EbN1) (Azoarcus sp. (strain EbN1)), this protein is Histidine ammonia-lyase.